The primary structure comprises 424 residues: Chloroquine resistance transporter (424 aa).

Residues 1–49 (MKFASKKNNQKNSSKNDERYRELDNLVQEGNGSRLGGGSCLGKCAHVFK) lie on the Cytoplasmic side of the membrane. An intramembrane segment occupies 50-58 (LIFKEIKDN). A helical transmembrane segment spans residues 59 to 83 (IFIYILSIIYLSVSVMNTIFAKRTL). Residues 84–89 (NKIGNY) lie on the Vacuolar side of the membrane. The chain crosses the membrane as a helical span at residues 90 to 111 (SFVTSETHNFICMIMFFIVYSL). At 112–126 (FGNKKGNSKERHRSF) the chain is on the cytoplasmic side. The helical transmembrane segment at 127–147 (NLQFFAISMLDACSVILAFIG) threads the bilayer. Topologically, residues 148-152 (LTRTT) are vacuolar. Residues 153-173 (GNIQSFVLQLSIPINMFFCFL) traverse the membrane as a helical segment. The Cytoplasmic portion of the chain corresponds to 174–180 (ILRYRYH). A helical membrane pass occupies residues 181–202 (LYNYLGAVIIVVTIALVEMKLS). Topologically, residues 203–210 (FETQEENS) are vacuolar. Residues 211-236 (IIFNLVLISSLIPVCFSNMTREIVFK) form a helical membrane-spanning segment. At 237-241 (KYKID) the chain is on the cytoplasmic side. The chain crosses the membrane as a helical span at residues 242–263 (ILRLNAMVSFFQLFTSCLILPV). Topologically, residues 264 to 279 (YTLPFLKQLHLPYNEI) are vacuolar. The stretch at 280 to 292 (WTNIKNGFACLFL) is an intramembrane region. 2 cysteine pairs are disulfide-bonded: Cys289–Cys312 and Cys301–Cys309. The Vacuolar portion of the chain corresponds to 293–314 (GRNTVVENCGLGMAKLCDDCDG). The helical transmembrane segment at 315 to 339 (AWKTFALFSFFDICDNLITSYIIDK) threads the bilayer. The Cytoplasmic portion of the chain corresponds to 340 to 343 (FSTM). Residues 344–361 (TYTIVSCIQGPALAIAYY) traverse the membrane as a helical segment. Over 362–374 (FKFLAGDVVREPR) the chain is Vacuolar. A helical transmembrane segment spans residues 375–397 (LLDFVTLFGYLFGSIIYRVGNII). Residues 398–424 (LERKKMRNEENEDSEGELTNVDSIITQ) lie on the Cytoplasmic side of the membrane.

This sequence belongs to the CRT-like transporter family. As to quaternary structure, monomer.

It is found in the membrane. It localises to the vacuole membrane. The catalysed reaction is L-arginine(in) = L-arginine(out). It catalyses the reaction L-lysine(in) = L-lysine(out). It carries out the reaction L-histidine(out) = L-histidine(in). The enzyme catalyses Fe(3+)(in) = Fe(3+)(out). The catalysed reaction is Fe(2+)(in) = Fe(2+)(out). In terms of biological role, nutrient transporter. Substrate transport is pH-dependent. Can transport arginine, lysine, histidine and peptides. Involved in maintaining the osmotic homeostasis of the digestive vacuole. Required for the normal asexual intraerythrocytic proliferation of parasites. Can transport Fe(2+) and Fe(3+). The chain is Chloroquine resistance transporter from Plasmodium falciparum (isolate 7G8).